The primary structure comprises 180 residues: MENFFNQFFENIGEDKNREGLKETPKRVQELWKFLYKGYKEDPKVALKSAYFQGVCDEMIVAQNIEFYSTCEHHLLPFLGNISVGYIPKEKIVGISAIAKLIEIYSKRLQIQERLTTQIAETFDEIIEPRGVIVVCEAKHLCMSMQGVQKQNAIIKTSVLRGLFKKDPKTRAEFMQLLKS.

3 residues coordinate Zn(2+): Cys-71, His-74, and Cys-142.

The protein belongs to the GTP cyclohydrolase I family. As to quaternary structure, homomer.

It catalyses the reaction GTP + H2O = 7,8-dihydroneopterin 3'-triphosphate + formate + H(+). The protein operates within cofactor biosynthesis; 7,8-dihydroneopterin triphosphate biosynthesis; 7,8-dihydroneopterin triphosphate from GTP: step 1/1. The polypeptide is GTP cyclohydrolase 1 (Helicobacter pylori (strain P12)).